The chain runs to 35 residues: Cytochrome c-550 (35 aa).

3 residues coordinate heme c: Cys-17, Cys-20, and His-21.

In terms of processing, binds 1 heme c group covalently per subunit.

Monoheme cytochrome which functions as an electron carrier in the reduction of nitrite by membrane vesicles. This chain is Cytochrome c-550, found in Virgibacillus halodenitrificans (Bacillus halodenitrificans).